The primary structure comprises 82 residues: RNA-binding protein KhpA (82 aa).

Residues 35–82 form the KH domain; it reads STILELRVSQSDVGKIIGRRGRIARAIRTLLGACAAKTNRRVQLEILD.

The protein belongs to the KhpA RNA-binding protein family. As to quaternary structure, forms a complex with KhpB.

The protein resides in the cytoplasm. A probable RNA chaperone. Forms a complex with KhpB which binds to cellular RNA and controls its expression. Plays a role in peptidoglycan (PG) homeostasis and cell length regulation. This Borreliella burgdorferi (strain ATCC 35210 / DSM 4680 / CIP 102532 / B31) (Borrelia burgdorferi) protein is RNA-binding protein KhpA.